We begin with the raw amino-acid sequence, 100 residues long: Cell division protein FtsB (100 aa).

The Cytoplasmic portion of the chain corresponds to 1–3 (MKW). The chain crosses the membrane as a helical span at residues 4–21 (LAIILVVALLALQYRLWM). Residues 22–100 (GEGSIASVVS…TDKDTKKNKK (79 aa)) are Periplasmic-facing. Positions 26–73 (IASVVSLNREIAKQKEENARLRERNRLLAAEVDALKQGKDAIEERARN) form a coiled coil.

The protein belongs to the FtsB family. As to quaternary structure, part of a complex composed of FtsB, FtsL and FtsQ.

The protein resides in the cell inner membrane. Its function is as follows. Essential cell division protein. May link together the upstream cell division proteins, which are predominantly cytoplasmic, with the downstream cell division proteins, which are predominantly periplasmic. The protein is Cell division protein FtsB of Saccharophagus degradans (strain 2-40 / ATCC 43961 / DSM 17024).